We begin with the raw amino-acid sequence, 267 residues long: Outer membrane protein assembly factor BamD (267 aa).

Positions 1 to 16 (MKKILLTVSLGLALSA) are cleaved as a signal peptide. Cys-17 carries the N-palmitoyl cysteine lipid modification. Residue Cys-17 is the site of S-diacylglycerol cysteine attachment.

This sequence belongs to the BamD family. In terms of assembly, part of the Bam complex.

Its subcellular location is the cell outer membrane. Part of the outer membrane protein assembly complex, which is involved in assembly and insertion of beta-barrel proteins into the outer membrane. Required for efficient transformation of Neisseria meningitidis by species-related DNA. This Neisseria meningitidis serogroup A / serotype 4A (strain DSM 15465 / Z2491) protein is Outer membrane protein assembly factor BamD.